The chain runs to 397 residues: Argininosuccinate synthase (397 aa).

9–17 (AYSGGLDTS) provides a ligand contact to ATP. Residue Tyr-86 coordinates L-citrulline. Residue Gly-116 coordinates ATP. L-aspartate contacts are provided by Thr-118, Asn-122, and Asp-123. Asn-122 is an L-citrulline binding site. L-citrulline contacts are provided by Arg-126, Ser-174, Glu-259, and Tyr-271.

The protein belongs to the argininosuccinate synthase family. Type 1 subfamily. Homotetramer.

The protein resides in the cytoplasm. It catalyses the reaction L-citrulline + L-aspartate + ATP = 2-(N(omega)-L-arginino)succinate + AMP + diphosphate + H(+). The protein operates within amino-acid biosynthesis; L-arginine biosynthesis; L-arginine from L-ornithine and carbamoyl phosphate: step 2/3. This Lactococcus lactis subsp. cremoris (strain MG1363) protein is Argininosuccinate synthase.